A 290-amino-acid polypeptide reads, in one-letter code: Pyridoxal kinase PdxY (290 aa).

A substrate-binding site is contributed by Ser14. ATP-binding residues include Asp116 and Glu153. Substrate is bound at residue Asp226.

Belongs to the pyridoxine kinase family. PdxY subfamily. In terms of assembly, homodimer. It depends on Mg(2+) as a cofactor.

The enzyme catalyses pyridoxal + ATP = pyridoxal 5'-phosphate + ADP + H(+). It functions in the pathway cofactor metabolism; pyridoxal 5'-phosphate salvage; pyridoxal 5'-phosphate from pyridoxal: step 1/1. In terms of biological role, pyridoxal kinase involved in the salvage pathway of pyridoxal 5'-phosphate (PLP). Catalyzes the phosphorylation of pyridoxal to PLP. The chain is Pyridoxal kinase PdxY from Rubrobacter xylanophilus (strain DSM 9941 / JCM 11954 / NBRC 16129 / PRD-1).